Consider the following 430-residue polypeptide: Serine--tRNA ligase (430 aa).

237–239 (TAE) contacts L-serine. ATP is bound at residue 268-270 (RSE). L-serine is bound at residue E291. Residue 355-358 (EISS) coordinates ATP. An L-serine-binding site is contributed by S391.

This sequence belongs to the class-II aminoacyl-tRNA synthetase family. Type-1 seryl-tRNA synthetase subfamily. As to quaternary structure, homodimer. The tRNA molecule binds across the dimer.

It is found in the cytoplasm. The catalysed reaction is tRNA(Ser) + L-serine + ATP = L-seryl-tRNA(Ser) + AMP + diphosphate + H(+). It carries out the reaction tRNA(Sec) + L-serine + ATP = L-seryl-tRNA(Sec) + AMP + diphosphate + H(+). It functions in the pathway aminoacyl-tRNA biosynthesis; selenocysteinyl-tRNA(Sec) biosynthesis; L-seryl-tRNA(Sec) from L-serine and tRNA(Sec): step 1/1. Functionally, catalyzes the attachment of serine to tRNA(Ser). Is also able to aminoacylate tRNA(Sec) with serine, to form the misacylated tRNA L-seryl-tRNA(Sec), which will be further converted into selenocysteinyl-tRNA(Sec). In Klebsiella pneumoniae subsp. pneumoniae (strain ATCC 700721 / MGH 78578), this protein is Serine--tRNA ligase.